Here is a 101-residue protein sequence, read N- to C-terminus: Small ribosomal subunit protein bS18c (101 aa).

The protein belongs to the bacterial ribosomal protein bS18 family. Part of the 30S ribosomal subunit.

Its subcellular location is the plastid. It localises to the chloroplast. The sequence is that of Small ribosomal subunit protein bS18c from Citrus sinensis (Sweet orange).